Consider the following 137-residue polypeptide: uncharacterized protein (137 aa).

This is an uncharacterized protein from Frog virus 3 (isolate Goorha) (FV-3).